We begin with the raw amino-acid sequence, 426 residues long: Serine--tRNA ligase (426 aa).

Residue 233 to 235 coordinates L-serine; it reads TAE. Residue 264–266 participates in ATP binding; that stretch reads RAE. Residue glutamate 287 coordinates L-serine. 351–354 is an ATP binding site; it reads EISS. Serine 387 is an L-serine binding site.

It belongs to the class-II aminoacyl-tRNA synthetase family. Type-1 seryl-tRNA synthetase subfamily. As to quaternary structure, homodimer. The tRNA molecule binds across the dimer.

The protein localises to the cytoplasm. The catalysed reaction is tRNA(Ser) + L-serine + ATP = L-seryl-tRNA(Ser) + AMP + diphosphate + H(+). The enzyme catalyses tRNA(Sec) + L-serine + ATP = L-seryl-tRNA(Sec) + AMP + diphosphate + H(+). The protein operates within aminoacyl-tRNA biosynthesis; selenocysteinyl-tRNA(Sec) biosynthesis; L-seryl-tRNA(Sec) from L-serine and tRNA(Sec): step 1/1. In terms of biological role, catalyzes the attachment of serine to tRNA(Ser). Is also able to aminoacylate tRNA(Sec) with serine, to form the misacylated tRNA L-seryl-tRNA(Sec), which will be further converted into selenocysteinyl-tRNA(Sec). In Clostridium kluyveri (strain NBRC 12016), this protein is Serine--tRNA ligase.